The primary structure comprises 86 residues: Small ribosomal subunit protein bS16 (86 aa).

The protein belongs to the bacterial ribosomal protein bS16 family.

The chain is Small ribosomal subunit protein bS16 from Methylacidiphilum infernorum (isolate V4) (Methylokorus infernorum (strain V4)).